Here is a 359-residue protein sequence, read N- to C-terminus: Chondroadherin (359 aa).

A signal peptide spans 1-22 (MVRPMLLLSLGLLAGLLPALAA). An intrachain disulfide couples C23 to C38. Positions 23-52 (CPQNCHCHSDLQHVICDKVGLQKIPKVSEK) constitute an LRRNT domain. LRR repeat units follow at residues 76–97 (NLVSLHLQHCQIREVAAGAFRG), 100–121 (QLIYLYLSHNDIRVLRAGAFDD), 124–145 (ELTYLYLDHNKVTELPRGLLSP), 148–169 (NLFILQLNNNKIRELRAGAFQG), 172–193 (DLRWLYLSENALSSLQPGALDD), 196–217 (NLAKFHVDRNQLSSYPSAALSK), 220–241 (VVEELKLSHNPLKSIPDNAFQS), 245–266 (YLETLWLDNTNLEKFSDGAFLG), and 269–290 (TLKHVHLENNRLNQLPSNFPFD). An O-linked (GalNAc...) serine glycan is attached at S144. The 49-residue stretch at 300–348 (NPWKCTCQLRGLRRWLEAKASRPDATCASPAKFKGQHIRDTDAFRSCKF) folds into the LRRCT domain. Intrachain disulfides connect C304/C346 and C306/C326.

This sequence belongs to the small leucine-rich proteoglycan (SLRP) family. SLRP class IV subfamily. Mostly monomeric. Interacts with collagen type II. Present in chondrocytes at all ages.

It localises to the secreted. Its subcellular location is the extracellular space. It is found in the extracellular matrix. Promotes attachment of chondrocytes, fibroblasts, and osteoblasts. This binding is mediated (at least for chondrocytes and fibroblasts) by the integrin alpha(2)beta(1). May play an important role in the regulation of chondrocyte growth and proliferation. The chain is Chondroadherin (CHAD) from Homo sapiens (Human).